We begin with the raw amino-acid sequence, 76 residues long: Small ribosomal subunit protein bS18 (76 aa).

The protein belongs to the bacterial ribosomal protein bS18 family. Part of the 30S ribosomal subunit. Forms a tight heterodimer with protein bS6.

Its function is as follows. Binds as a heterodimer with protein bS6 to the central domain of the 16S rRNA, where it helps stabilize the platform of the 30S subunit. The protein is Small ribosomal subunit protein bS18 of Mesoplasma florum (strain ATCC 33453 / NBRC 100688 / NCTC 11704 / L1) (Acholeplasma florum).